We begin with the raw amino-acid sequence, 24 residues long: Unknown protein 3 (24 aa).

The protein is Unknown protein 3 of Pseudotsuga menziesii (Douglas-fir).